A 185-amino-acid polypeptide reads, in one-letter code: Ribosome-recycling factor (185 aa).

This sequence belongs to the RRF family.

Its subcellular location is the cytoplasm. Its function is as follows. Responsible for the release of ribosomes from messenger RNA at the termination of protein biosynthesis. May increase the efficiency of translation by recycling ribosomes from one round of translation to another. This is Ribosome-recycling factor from Brevibacillus brevis (strain 47 / JCM 6285 / NBRC 100599).